Reading from the N-terminus, the 242-residue chain is Glutamine transport ATP-binding protein GlnQ (242 aa).

Positions 2–236 (ITFQNVNKHY…PKEERARLFL (235 aa)) constitute an ABC transporter domain. 34 to 41 (GPSGSGKS) provides a ligand contact to ATP.

The protein belongs to the ABC transporter superfamily. In terms of assembly, the complex is composed of two ATP-binding proteins (GlnQ), two transmembrane proteins (GlnM and GlnP) and a solute-binding protein (GlnH).

Its subcellular location is the cell membrane. Part of the ABC transporter complex GlnHMPQ involved in glutamine transport. Probably responsible for energy coupling to the transport system. The protein is Glutamine transport ATP-binding protein GlnQ (glnQ) of Bacillus subtilis (strain 168).